A 723-amino-acid polypeptide reads, in one-letter code: Nucleolar protein 11 (723 aa).

Its subcellular location is the nucleus. The protein resides in the nucleolus. Functionally, ribosome biogenesis factor. May be required for both optimal rDNA transcription and pre-rRNA processing. This Gallus gallus (Chicken) protein is Nucleolar protein 11 (NOL11).